The chain runs to 626 residues: Extracellular metalloproteinase 1 (626 aa).

The signal sequence occupies residues Met-1 to Ser-17. Positions His-18 to Asp-241 are excised as a propeptide. The N-linked (GlcNAc...) asparagine glycan is linked to Asn-315. His-425 provides a ligand contact to Zn(2+). The active site involves Glu-426. His-429 contacts Zn(2+). Positions Gly-606–Cys-626 are disordered. A compositionally biased stretch (polar residues) spans Arg-610 to Cys-626.

It belongs to the peptidase M36 family. Zn(2+) is required as a cofactor.

Its subcellular location is the secreted. Secreted metalloproteinase that allows assimilation of proteinaceous substrates. This chain is Extracellular metalloproteinase 1 (MEP1), found in Phaeosphaeria nodorum (strain SN15 / ATCC MYA-4574 / FGSC 10173) (Glume blotch fungus).